Consider the following 265-residue polypeptide: 5'-nucleotidase SurE (265 aa).

A divalent metal cation contacts are provided by Asp-8, Asp-9, Ser-39, and Asn-96.

The protein belongs to the SurE nucleotidase family. A divalent metal cation serves as cofactor.

It localises to the cytoplasm. It catalyses the reaction a ribonucleoside 5'-phosphate + H2O = a ribonucleoside + phosphate. Functionally, nucleotidase that shows phosphatase activity on nucleoside 5'-monophosphates. This chain is 5'-nucleotidase SurE, found in Dehalococcoides mccartyi (strain CBDB1).